Here is a 134-residue protein sequence, read N- to C-terminus: Small ribosomal subunit protein uS8c (134 aa).

Belongs to the universal ribosomal protein uS8 family. Part of the 30S ribosomal subunit.

The protein localises to the plastid. It is found in the chloroplast. Its function is as follows. One of the primary rRNA binding proteins, it binds directly to 16S rRNA central domain where it helps coordinate assembly of the platform of the 30S subunit. The protein is Small ribosomal subunit protein uS8c (rps8) of Panax ginseng (Korean ginseng).